The chain runs to 460 residues: Dihydroorotate dehydrogenase (quinone), mitochondrial (460 aa).

The transit peptide at 1–32 (MAGRAATSSAKWAREFLFRRVSSNPLGATRNC) directs the protein to the mitochondrion. Residues 53 to 69 (ILTGATIGLAIAGGAYV) traverse the membrane as a helical segment. Residues 141-145 (AGFDK) and S165 each bind FMN. K145 is a binding site for substrate. 190 to 194 (NRCGF) lines the substrate pocket. A disordered region spans residues 213 to 245 (RMLAETSATSSSPSDDVKPGGKSGPGILGVNLG). The FMN site is built by N243 and N274. Residue 274–279 (NVSSPN) coordinates substrate. S277 functions as the Nucleophile in the catalytic mechanism. Positions 319 and 347 each coordinate FMN. 348–349 (NT) contacts substrate. FMN is bound by residues G371, G400, and 421 to 422 (YT).

The protein belongs to the dihydroorotate dehydrogenase family. Type 2 subfamily. It depends on FMN as a cofactor.

The protein resides in the mitochondrion inner membrane. The catalysed reaction is (S)-dihydroorotate + a quinone = orotate + a quinol. It participates in pyrimidine metabolism; UMP biosynthesis via de novo pathway; orotate from (S)-dihydroorotate (quinone route): step 1/1. Functionally, catalyzes the conversion of dihydroorotate to orotate with quinone as electron acceptor. In Arabidopsis thaliana (Mouse-ear cress), this protein is Dihydroorotate dehydrogenase (quinone), mitochondrial (PYRD).